The sequence spans 836 residues: MEGAGGENEKKKMSSERRKEKSRDAARSRRSKESEVFYELAHQLPLPHNVSSHLDKASVMRLTISYLRVRKLLDAGGLDSEDEMKAQMDCFYLKALDGFVMVLTDDGDMVYISDNVNKYMGLTQFELTGHSVFDFTHPCDHEEMREMLTHRNGPVRKGKELNTQRSFFLRMKCTLTSRGRTMNIKSATWKVLHCTGHIHVYDTNSNQPQCGYKKPPMTCLVLICEPIPHPSNIEIPLDSKTFLSRHSLDMKFSYCDERITELMGYEPEELLGRSIYEYYHALDSDHLTKTHHDMFTKGQVTTGQYRMLAKRGGYVWVETQATVIYNTKNSQPQCIVCVNYVVSGIIQHDLIFSLQQTESVLKPVESSDMKMTQLFTKVESEDTSCLFDKLKKEPDALTLLAPAAGDTIISLDFGSDDTETEDQQLEDVPLYNDVMFPSSNEKLNINLAMSPLPSSETPKPLRSSADPALNQEVALKLESSPESLGLSFTMPQIQDQPASPSDGSTRQSSPERLLQENVNTPNFSQPNSPSEYCFDVDSDMVNVFKLELVEKLFAEDTEAKNPFSTQDTDLDLEMLAPYIPMDDDFQLRSFDQLSPLESNSPSPPSMSTVTGFQQTQLQKPTITATATTTATTDESKTETKDNKEDIKILIASPSSTQVPQETTTAKASAYSGTHSRTASPDRAGKRVIEQTDKAHPRSLNLSATLNQRNTVPEEELNPKTIASQNAQRKRKMEHDGSLFQAAGIGTLLQQPGDCAPTMSLSWKRVKGFISSEQNGTEQKTIILIPSDLACRLLGQSMDESGLPQLTSYDCEVNAPIQGSRNLLQGEELLRALDQVN.

A disordered region spans residues 1 to 30 (MEGAGGENEKKKMSSERRKEKSRDAARSRR). Residues 1–401 (MEGAGGENEK…KEPDALTLLA (401 aa)) form an interaction with TSGA10 region. Positions 7-30 (ENEKKKMSSERRKEKSRDAARSRR) are enriched in basic and acidic residues. Residues 17–70 (RRKEKSRDAARSRRSKESEVFYELAHQLPLPHNVSSHLDKASVMRLTISYLRVR) form the bHLH domain. The interval 21 to 30 (KSRDAARSRR) is DNA-binding. Residues 80-155 (SEDEMKAQMD…EMLTHRNGPV (76 aa)) form the PAS 1 domain. Residues 170–191 (RMKCTLTSRGRTMNIKSATWKV) are required for heterodimer formation with ARNT. Residues 228 to 298 (PHPSNIEIPL…KTHHDMFTKG (71 aa)) form the PAS 2 domain. Phosphoserine; by CK1 is present on S247. The region spanning 302–345 (TGQYRMLAKRGGYVWVETQATVIYNTKNSQPQCIVCVNYVVSGI) is the PAC domain. Positions 380–417 (SEDTSCLFDKLKKEPDALTLLAPAAGDTIISLDFGSDD) are N-terminal VHL recognition site. A Glycyl lysine isopeptide (Lys-Gly) (interchain with G-Cter in SUMO) cross-link involves residue K391. The interval 401-613 (APAAGDTIIS…PSMSTVTGFQ (213 aa)) is ODD. A 4-hydroxyproline modification is found at P402. Residue K476 forms a Glycyl lysine isopeptide (Lys-Gly) (interchain with G-Cter in SUMO) linkage. Residues 492-511 (QIQDQPASPSDGSTRQSSPE) form a disordered region. Residues 544 to 588 (FKLELVEKLFAEDTEAKNPFSTQDTDLDLEMLAPYIPMDDDFQLR) form an NTAD region. K545 is subject to N6-acetyllysine; alternate. Glycyl lysine isopeptide (Lys-Gly) (interchain with G-Cter in ubiquitin) cross-links involve residues K545, K551, and K560. K545 is covalently cross-linked (Glycyl lysine isopeptide (Lys-Gly) (interchain with G-Cter in ubiquitin); alternate). S564 is modified (phosphoserine; by GSK3-beta). T568 carries the phosphothreonine; by GSK3-beta modification. Residues 569–585 (DLDLEMLAPYIPMDDDF) form a C-terminal VHL recognition site region. The residue at position 577 (P577) is a 4-hydroxyproline. S589 is modified (phosphoserine; by PLK3). Positions 589-795 (SFDQLSPLES…SDLACRLLGQ (207 aa)) are ID. 2 disordered regions span residues 593–684 (LSPL…DRAG) and 707–734 (QRNT…KMEH). S602 carries the post-translational modification Phosphoserine; by GSK3-beta. The segment covering 608-620 (TVTGFQQTQLQKP) has biased composition (polar residues). The segment covering 621–632 (TITATATTTATT) has biased composition (low complexity). Positions 633-647 (DESKTETKDNKEDIK) are enriched in basic and acidic residues. Over residues 652-678 (SPSSTQVPQETTTAKASAYSGTHSRTA) the composition is skewed to polar residues. S668 carries the phosphoserine; by PLK3 modification. K719 is modified (N6-acetyllysine). The short motif at 728–731 (RKRK) is the Nuclear localization signal element. The segment at 796 to 836 (SMDESGLPQLTSYDCEVNAPIQGSRNLLQGEELLRALDQVN) is CTAD. C810 carries the post-translational modification S-nitrosocysteine. N813 bears the (3S)-3-hydroxyasparagine mark.

In terms of assembly, interacts with the ARNT; forms a heterodimer that binds core DNA sequence 5'-TACGTG-3' within the hypoxia response element (HRE) of target gene promoters. Interacts with COPS5; the interaction increases the transcriptional activity of HIF1A through increased stability. Interacts with EP300 (via TAZ-type 1 domains); the interaction is stimulated in response to hypoxia and inhibited by CITED2. Interacts with CREBBP (via TAZ-type 1 domains). Interacts with NCOA1, NCOA2, APEX1 and HSP90. Interacts (hydroxylated within the ODD domain) with VHLL (via beta domain); the interaction, leads to polyubiquitination and subsequent HIF1A proteasomal degradation. During hypoxia, sumoylated HIF1A also binds VHL; the interaction promotes the ubiquitination of HIF1A. Interacts with SENP1; the interaction desumoylates HIF1A resulting in stabilization and activation of transcription. Interacts (via the ODD domain) with NAA10; the interaction appears not to acetylate HIF1A nor have any affect on protein stability, during hypoxia. Interacts with RWDD3; the interaction enhances HIF1A sumoylation. Interacts with TSGA10. Interacts with HIF3A. Interacts with RORA (via the DNA binding domain); the interaction enhances HIF1A transcription under hypoxia through increasing protein stability. Interaction with PSMA7 inhibits the transactivation activity of HIF1A under both normoxic and hypoxia-mimicking conditions. Interacts with USP20. Interacts with RACK1; promotes HIF1A ubiquitination and proteasome-mediated degradation. Interacts (via N-terminus) with USP19. Interacts with SIRT2. Interacts (deacetylated form) with EGLN1. Interacts with CBFA2T3. Interacts with HSP90AA1 and HSP90AB1. Interacts with DCUN1D1; this interaction increases the interaction between VHL and DCUN1D1. Interacts with HIF1AN. S-nitrosylation of Cys-810 may be responsible for increased recruitment of p300 coactivator necessary for transcriptional activity of HIF-1 complex. Post-translationally, requires phosphorylation for DNA-binding. Phosphorylation at Ser-247 by CSNK1D/CK1 represses kinase activity and impairs ARNT binding. Phosphorylation by GSK3-beta and PLK3 promote degradation by the proteasome. In terms of processing, sumoylated; with SUMO1 under hypoxia. Sumoylation is enhanced through interaction with RWDD3. Both sumoylation and desumoylation seem to be involved in the regulation of its stability during hypoxia. Sumoylation can promote either its stabilization or its VHL-dependent degradation by promoting hydroxyproline-independent HIF1A-VHL complex binding, thus leading to HIF1A ubiquitination and proteasomal degradation. Desumoylation by SENP1 increases its stability amd transcriptional activity. There is a disaccord between various publications on the effect of sumoylation and desumoylation on its stability and transcriptional activity. Acetylation of Lys-545 by ARD1 increases interaction with VHL and stimulates subsequent proteasomal degradation. Deacetylation of Lys-719 by SIRT2 increases its interaction with and hydroxylation by EGLN1 thereby inactivating HIF1A activity by inducing its proteasomal degradation. Post-translationally, ubiquitinated; in normoxia, following hydroxylation and interaction with VHL. Lys-545 appears to be the principal site of ubiquitination. Clioquinol, the Cu/Zn-chelator, inhibits ubiquitination through preventing hydroxylation at Asn-813. Ubiquitinated by E3 ligase VHL. Deubiquitinated by UCHL1. In terms of processing, the iron and 2-oxoglutarate dependent 3-hydroxylation of asparagine is (S) stereospecific within HIF CTAD domains. In normoxia, is hydroxylated on Pro-402 and Pro-577 in the oxygen-dependent degradation domain (ODD) by EGLN1/PHD2 and EGLN2/PHD1. EGLN3/PHD3 has also been shown to hydroxylate Pro-577. The hydroxylated prolines promote interaction with VHL, initiating rapid ubiquitination and subsequent proteasomal degradation. Deubiquitinated by USP20. Under hypoxia, proline hydroxylation is impaired and ubiquitination is attenuated, resulting in stabilization. In normoxia, is hydroxylated on Asn-813 by HIF1AN, thus abrogating interaction with CREBBP and EP300 and preventing transcriptional activation. Repressed by iron ion, via Fe(2+) prolyl hydroxylase (PHD) enzymes-mediated hydroxylation and subsequent proteasomal degradation. Ubiquitous.

Its subcellular location is the cytoplasm. The protein localises to the nucleus. It localises to the nucleus speckle. Induced by reactive oxygen species (ROS). Its function is as follows. Functions as a master transcriptional regulator of the adaptive response to hypoxia. Under hypoxic conditions, activates the transcription of over 40 genes, including erythropoietin, glucose transporters, glycolytic enzymes, vascular endothelial growth factor, HILPDA, and other genes whose protein products increase oxygen delivery or facilitate metabolic adaptation to hypoxia. Plays an essential role in embryonic vascularization, tumor angiogenesis and pathophysiology of ischemic disease. Heterodimerizes with ARNT; heterodimer binds to core DNA sequence 5'-TACGTG-3' within the hypoxia response element (HRE) of target gene promoters. Activation requires recruitment of transcriptional coactivators such as CREBBP and EP300. Activity is enhanced by interaction with NCOA1 and/or NCOA2. Interaction with redox regulatory protein APEX1 seems to activate CTAD and potentiates activation by NCOA1 and CREBBP. Involved in the axonal distribution and transport of mitochondria in neurons during hypoxia. The protein is Hypoxia-inducible factor 1-alpha (Hif1a) of Mus musculus (Mouse).